The chain runs to 235 residues: tRNA pseudouridine synthase B (235 aa).

Residue D45 is the Nucleophile of the active site.

Belongs to the pseudouridine synthase TruB family. Type 1 subfamily.

It catalyses the reaction uridine(55) in tRNA = pseudouridine(55) in tRNA. Its function is as follows. Responsible for synthesis of pseudouridine from uracil-55 in the psi GC loop of transfer RNAs. This Chlamydia felis (strain Fe/C-56) (Chlamydophila felis) protein is tRNA pseudouridine synthase B.